A 642-amino-acid chain; its full sequence is Nucleolar GTP-binding protein 1 (642 aa).

The OBG-type G domain occupies 168-340 (RTLLICGYPN…VRNKACEKLL (173 aa)). GTP contacts are provided by residues 174–181 (GYPNVGKS), 220–224 (DTPGI), and 288–291 (NKTD). A disordered region spans residues 585–642 (MDGVADASMRSKADRMAKLHRRERNRQARQGEADRHATASLPKHLFSGKRGIGSNDRR). Positions 609-621 (NRQARQGEADRHA) are enriched in basic and acidic residues.

It belongs to the TRAFAC class OBG-HflX-like GTPase superfamily. OBG GTPase family. NOG subfamily.

The protein resides in the nucleus. The protein localises to the nucleolus. In terms of biological role, involved in the biogenesis of the 60S ribosomal subunit. The sequence is that of Nucleolar GTP-binding protein 1 (NOG1) from Eremothecium gossypii (strain ATCC 10895 / CBS 109.51 / FGSC 9923 / NRRL Y-1056) (Yeast).